A 362-amino-acid chain; its full sequence is 3-dehydroquinate synthase (362 aa).

NAD(+) is bound by residues 70 to 75, 104 to 108, 128 to 129, K141, K150, and 168 to 171; these read DGEKYK, GVIGD, TT, and TLNT. Residues E183, H246, and H263 each contribute to the Zn(2+) site.

It belongs to the sugar phosphate cyclases superfamily. Dehydroquinate synthase family. The cofactor is Co(2+). Zn(2+) is required as a cofactor. NAD(+) serves as cofactor.

It localises to the cytoplasm. The enzyme catalyses 7-phospho-2-dehydro-3-deoxy-D-arabino-heptonate = 3-dehydroquinate + phosphate. Its pathway is metabolic intermediate biosynthesis; chorismate biosynthesis; chorismate from D-erythrose 4-phosphate and phosphoenolpyruvate: step 2/7. Functionally, catalyzes the conversion of 3-deoxy-D-arabino-heptulosonate 7-phosphate (DAHP) to dehydroquinate (DHQ). This chain is 3-dehydroquinate synthase, found in Haemophilus influenzae (strain 86-028NP).